The sequence spans 395 residues: MSVQPTPADHFTFGLWTVGWTGADPFGVATRKNLDPVEAVHKLAELGAYGITFHDNDLIPFDATEAEREKILGDFNQALKDTGLKVPMVTTNLFSHPVFKDGGFTSNDRSIRRFALAKVLHNIDLAAEMGAETFVMWGGREGSEYDGSKDLAAALDRMREGVDTAAGYIKDKGYNLRIALEPKPNEPRGDIFLPTVGHGLAFIEQLEHGDIVGLNPETGHEQMAGLNFTHGIAQALWAEKLFHIDLNGQRGIKYDQDLVFGHGDLTSAFFTVDLLENGFPNGGPKYTGPRHFDYKPSRTDGYDGVWDSAKANMSMYLLLKERALAFRADPEVQEAMKTSGVFELGETTLNAGESAADLMNDSASFAGFDAEAAAERNFAFIRLNQLAIEHLLGSR.

Residues histidine 54 and aspartate 57 contribute to the active site. Positions 181, 217, 220, 245, 255, 257, and 293 each coordinate Mg(2+).

It belongs to the xylose isomerase family. In terms of assembly, homotetramer. It depends on Mg(2+) as a cofactor.

The protein resides in the cytoplasm. It catalyses the reaction alpha-D-xylose = alpha-D-xylulofuranose. The sequence is that of Xylose isomerase (xylA) from Arthrobacter sp. (strain NRRL B3728).